An 81-amino-acid chain; its full sequence is ATP synthase subunit c (81 aa).

Helical transmembrane passes span 7–27 (FVAL…CIGI) and 53–73 (FLLA…AMMF).

This sequence belongs to the ATPase C chain family. As to quaternary structure, F-type ATPases have 2 components, F(1) - the catalytic core - and F(0) - the membrane proton channel. F(1) has five subunits: alpha(3), beta(3), gamma(1), delta(1), epsilon(1). F(0) has three main subunits: a(1), b(2) and c(10-14). The alpha and beta chains form an alternating ring which encloses part of the gamma chain. F(1) is attached to F(0) by a central stalk formed by the gamma and epsilon chains, while a peripheral stalk is formed by the delta and b chains.

The protein localises to the cell inner membrane. Its function is as follows. F(1)F(0) ATP synthase produces ATP from ADP in the presence of a proton or sodium gradient. F-type ATPases consist of two structural domains, F(1) containing the extramembraneous catalytic core and F(0) containing the membrane proton channel, linked together by a central stalk and a peripheral stalk. During catalysis, ATP synthesis in the catalytic domain of F(1) is coupled via a rotary mechanism of the central stalk subunits to proton translocation. Functionally, key component of the F(0) channel; it plays a direct role in translocation across the membrane. A homomeric c-ring of between 10-14 subunits forms the central stalk rotor element with the F(1) delta and epsilon subunits. In Azoarcus sp. (strain BH72), this protein is ATP synthase subunit c.